A 733-amino-acid chain; its full sequence is Zinc finger protein indra (733 aa).

Residues 17–91 enclose the ZAD domain; the sequence is VRCDHCGTSQ…RETVDRVQEQ (75 aa). Residues Cys19, Cys22, Cys64, and Cys67 each coordinate Zn(2+). Residues 90–100 show a composition bias toward basic and acidic residues; sequence EQPAKKTKVAE. Residues 90-121 are disordered; sequence EQPAKKTKVAEIEEPSTQESDKKAVKVPKKNT. A phosphoserine mark is found at Ser109, Ser153, and Ser176. Phosphothreonine occurs at positions 180 and 188. 2 C2H2-type zinc fingers span residues 228 to 251 and 259 to 282; these read FQCP…QKEH and YPCT…RDTH. The span at 285 to 316 shows a compositional bias: basic and acidic residues; sequence TFESEAKTKAKESKEKEAKSGAKNKIDAKAKE. The tract at residues 285–336 is disordered; sequence TFESEAKTKAKESKEKEAKSGAKNKIDAKAKETNAVSQRKKPKEKKSKEKKT. 2 C2H2-type zinc fingers span residues 416-439 and 447-469; these read FQCE…KTVH and FKCH…MTLH. Disordered regions lie at residues 499-525 and 540-622; these read IENT…FTNR and AFKT…SSDV. Positions 592–602 are enriched in polar residues; that stretch reads SVSTTNGNSPA. A phosphoserine mark is found at Ser600, Ser642, and Ser646. Phosphothreonine is present on Thr647. C2H2-type zinc fingers lie at residues 653 to 676 and 708 to 733; these read LSCD…EKKH and LPCG…RKRH. Residue Ser654 is modified to Phosphoserine.

This sequence belongs to the krueppel C2H2-type zinc-finger protein family.

It is found in the nucleus. It localises to the nucleolus. Functionally, required for rDNA copy number maintenance and non-random sister chromatid segregation (NRSS) following unequal sister chromatid exchange. Binds ribosomal DNA (rDNA) preferentially binding to intergenic spacers (IGS) regions on both X and Y chromosomes. Essential for NRSS, a mechanism which contributes to the recovery and maintenance of inherently unstable rDNA copy numbers so that the integrity of the germline genome is upheld over generations and germline immortality is sustained. May be involved in transcriptional regulation. This is Zinc finger protein indra from Drosophila melanogaster (Fruit fly).